Consider the following 206-residue polypeptide: MANVKVYNIEGKEVGSLELNDAIFGVEVNEHLMHMAVVSQLANKRQGTQSAKTRAEVSGGGRKPWRQKGTGHARQGSTRSPQWKGGGVVFAPKPRDYSFKMNRKEKSLAIKSALTSRVEAQKLIVLDSMNMDEIKTKKFKAVLENLKVNKALVVLDKKDENVILSARNIPTVRTATSNAINVYDIVKYDTLVITKDAVAQIEEVYA.

Polar residues predominate over residues 43-52 (NKRQGTQSAK). Positions 43 to 86 (NKRQGTQSAKTRAEVSGGGRKPWRQKGTGHARQGSTRSPQWKGG) are disordered.

The protein belongs to the universal ribosomal protein uL4 family. In terms of assembly, part of the 50S ribosomal subunit.

Functionally, one of the primary rRNA binding proteins, this protein initially binds near the 5'-end of the 23S rRNA. It is important during the early stages of 50S assembly. It makes multiple contacts with different domains of the 23S rRNA in the assembled 50S subunit and ribosome. Its function is as follows. Forms part of the polypeptide exit tunnel. This Lachnoclostridium phytofermentans (strain ATCC 700394 / DSM 18823 / ISDg) (Clostridium phytofermentans) protein is Large ribosomal subunit protein uL4.